The sequence spans 247 residues: Aspartate/glutamate leucyltransferase (247 aa).

Belongs to the R-transferase family. Bpt subfamily.

It is found in the cytoplasm. The catalysed reaction is N-terminal L-glutamyl-[protein] + L-leucyl-tRNA(Leu) = N-terminal L-leucyl-L-glutamyl-[protein] + tRNA(Leu) + H(+). It carries out the reaction N-terminal L-aspartyl-[protein] + L-leucyl-tRNA(Leu) = N-terminal L-leucyl-L-aspartyl-[protein] + tRNA(Leu) + H(+). Its function is as follows. Functions in the N-end rule pathway of protein degradation where it conjugates Leu from its aminoacyl-tRNA to the N-termini of proteins containing an N-terminal aspartate or glutamate. The chain is Aspartate/glutamate leucyltransferase from Chromohalobacter salexigens (strain ATCC BAA-138 / DSM 3043 / CIP 106854 / NCIMB 13768 / 1H11).